Here is a 476-residue protein sequence, read N- to C-terminus: Bifunctional protein HldE (476 aa).

Residues 1-319 (MKVSLPAFEK…EALALHHGES (319 aa)) form a ribokinase region. 195–198 (NMSE) contributes to the ATP binding site. D264 is a catalytic residue. A cytidylyltransferase region spans residues 345 to 476 (MTNGCFDILH…AIIQNIMANQ (132 aa)).

In the N-terminal section; belongs to the carbohydrate kinase PfkB family. This sequence in the C-terminal section; belongs to the cytidylyltransferase family. Homodimer.

It carries out the reaction D-glycero-beta-D-manno-heptose 7-phosphate + ATP = D-glycero-beta-D-manno-heptose 1,7-bisphosphate + ADP + H(+). The catalysed reaction is D-glycero-beta-D-manno-heptose 1-phosphate + ATP + H(+) = ADP-D-glycero-beta-D-manno-heptose + diphosphate. The protein operates within nucleotide-sugar biosynthesis; ADP-L-glycero-beta-D-manno-heptose biosynthesis; ADP-L-glycero-beta-D-manno-heptose from D-glycero-beta-D-manno-heptose 7-phosphate: step 1/4. It participates in nucleotide-sugar biosynthesis; ADP-L-glycero-beta-D-manno-heptose biosynthesis; ADP-L-glycero-beta-D-manno-heptose from D-glycero-beta-D-manno-heptose 7-phosphate: step 3/4. Its function is as follows. Catalyzes the phosphorylation of D-glycero-D-manno-heptose 7-phosphate at the C-1 position to selectively form D-glycero-beta-D-manno-heptose-1,7-bisphosphate. In terms of biological role, catalyzes the ADP transfer from ATP to D-glycero-beta-D-manno-heptose 1-phosphate, yielding ADP-D-glycero-beta-D-manno-heptose. This is Bifunctional protein HldE from Shewanella sp. (strain W3-18-1).